We begin with the raw amino-acid sequence, 378 residues long: Isobutylamine N-hydroxylase (378 aa).

As to quaternary structure, exists in dimeric or trimeric form depending upon buffer conditions. It can form an isobutylamine N-hydroxylase two component enzyme system formed of a flavin reductase component (VlmR) and a monooxygenase component (VlmH).

It catalyses the reaction 2-methylpropan-1-amine + FADH2 + O2 = N-(2-methylpropyl)hydroxylamine + FAD + H2O + 2 H(+). It carries out the reaction 2-methylpropan-1-amine + FMNH2 + O2 = N-(2-methylpropyl)hydroxylamine + FMN + H2O + 2 H(+). Its activity is regulated as follows. Inhibited by 5',5'-dithio-bis(2-nitrobenzoic acid) (DTNB) and 4-(hydroxymercuri)benzoic acid (p-HMB). Involved in the biosynthesis of the azoxy antibiotic valanimycin, which has an antitumor activity. Catalyzes the oxidation of isobutylamine to isobutylhydroxylamine via the formation of a flavin 4a-hydroperoxide. Unlike other known N-hydroxylases, isobutylamine N-hydroxylase cannot carry out the reduction of the flavin cofactor and requires the NADPH-flavin oxidoreductase VlmR. Also able to oxidize propan-1-amine, butan-1-amine, butan-2-amine and benzylamine. It has a similar activity with either FMNH(2) or FADH(2). The polypeptide is Isobutylamine N-hydroxylase (Streptomyces viridifaciens).